Consider the following 26-residue polypeptide: Turripeptide OL57 (26 aa).

Contains 2 disulfide bonds. Expressed by the venom duct.

The protein localises to the secreted. In terms of biological role, acts as a neurotoxin by inhibiting an ion channel. The protein is Turripeptide OL57 of Iotyrris olangoensis (Sea snail).